A 309-amino-acid polypeptide reads, in one-letter code: Aspartate carbamoyltransferase catalytic subunit (309 aa).

Carbamoyl phosphate is bound by residues Arg-55 and Thr-56. Lys-85 is an L-aspartate binding site. 3 residues coordinate carbamoyl phosphate: Arg-106, His-135, and Gln-138. L-aspartate is bound by residues Arg-168 and Arg-230. Residues Leu-268 and Pro-269 each contribute to the carbamoyl phosphate site.

The protein belongs to the aspartate/ornithine carbamoyltransferase superfamily. ATCase family. In terms of assembly, heterododecamer (2C3:3R2) of six catalytic PyrB chains organized as two trimers (C3), and six regulatory PyrI chains organized as three dimers (R2).

It carries out the reaction carbamoyl phosphate + L-aspartate = N-carbamoyl-L-aspartate + phosphate + H(+). The protein operates within pyrimidine metabolism; UMP biosynthesis via de novo pathway; (S)-dihydroorotate from bicarbonate: step 2/3. Catalyzes the condensation of carbamoyl phosphate and aspartate to form carbamoyl aspartate and inorganic phosphate, the committed step in the de novo pyrimidine nucleotide biosynthesis pathway. The sequence is that of Aspartate carbamoyltransferase catalytic subunit from Vibrio vulnificus (strain CMCP6).